Consider the following 239-residue polypeptide: MQTRITWHGHSNFQVASGGTNVLIDPFFDGNPVAAARWDAIDRPDLVLVTHDHGDHVGQAIDICKATGAKLGCVVGTDARLVEAGLPRELVLNGIGFNIGGTVECAGARITMTQAYHSSESGVPVGYIVTMPDGFTFYHAGDTGIFSEMELWGRLYAIDLALLPIGGVFTMDPRQAALACSLLRARSVIPMHWGTFPVLEQNTTRFREQLANHAPDCRLFNMTPGESLTLDRSQEGCAC.

This sequence belongs to the UPF0173 family.

The sequence is that of UPF0173 metal-dependent hydrolase DVU_3308 from Nitratidesulfovibrio vulgaris (strain ATCC 29579 / DSM 644 / CCUG 34227 / NCIMB 8303 / VKM B-1760 / Hildenborough) (Desulfovibrio vulgaris).